The sequence spans 493 residues: Alpha-amylase-related protein (493 aa).

The N-terminal stretch at 1–19 is a signal peptide; the sequence is MFKFALTLTLCLAGSLSLA. Glutamine 20 is modified (pyrrolidone carboxylic acid). A disulfide bridge links cysteine 47 with cysteine 103. Residues asparagine 117, glutamine 168, and aspartate 177 each coordinate Ca(2+). Cysteine 156 and cysteine 170 are joined by a disulfide. Arginine 205 lines the chloride pocket. The active-site Nucleophile is the aspartate 207. Ca(2+) is bound at residue histidine 211. The active-site Proton donor is the glutamate 244. Asparagine 307 and arginine 342 together coordinate chloride. Intrachain disulfides connect cysteine 375–cysteine 381, cysteine 417–cysteine 440, and cysteine 447–cysteine 459.

The protein belongs to the glycosyl hydrolase 13 family. In terms of assembly, monomer. Requires Ca(2+) as cofactor. Chloride is required as a cofactor.

The protein localises to the secreted. The enzyme catalyses Endohydrolysis of (1-&gt;4)-alpha-D-glucosidic linkages in polysaccharides containing three or more (1-&gt;4)-alpha-linked D-glucose units.. In Drosophila sechellia (Fruit fly), this protein is Alpha-amylase-related protein (Amyrel).